The primary structure comprises 319 residues: Ribonucleoside-diphosphate reductase small chain (319 aa).

Positions 70, 101, and 104 each coordinate Fe cation. The active site involves Tyr108. Residues Glu163, Glu197, and His200 each contribute to the Fe cation site. An interaction with R1 region spans residues 313–319 (FSLDVDF).

The protein belongs to the ribonucleoside diphosphate reductase small chain family. Interacts with RNR1/OPG080 subunit. Can interact with host RNR1 supunit. The cofactor is Fe cation.

It catalyses the reaction a 2'-deoxyribonucleoside 5'-diphosphate + [thioredoxin]-disulfide + H2O = a ribonucleoside 5'-diphosphate + [thioredoxin]-dithiol. In terms of biological role, ribonucleoside-diphosphate reductase holoenzyme provides the precursors necessary for viral DNA synthesis. Allows virus growth in non-dividing cells. Catalyzes the biosynthesis of deoxyribonucleotides from the corresponding ribonucleotides. This Bos taurus (Bovine) protein is Ribonucleoside-diphosphate reductase small chain (OPG048).